A 92-amino-acid polypeptide reads, in one-letter code: Acylphosphatase (92 aa).

The region spanning 5 to 92 (RVHIIVSGLV…TSCREFRILT (88 aa)) is the Acylphosphatase-like domain. Residues Arg-20 and Asn-38 contribute to the active site.

It belongs to the acylphosphatase family.

The catalysed reaction is an acyl phosphate + H2O = a carboxylate + phosphate + H(+). The chain is Acylphosphatase (acyP) from Chlorobaculum tepidum (strain ATCC 49652 / DSM 12025 / NBRC 103806 / TLS) (Chlorobium tepidum).